The following is a 407-amino-acid chain: Serine hydroxymethyltransferase (407 aa).

Residues L117 and 121–123 (GHL) contribute to the (6S)-5,6,7,8-tetrahydrofolate site. Position 226 is an N6-(pyridoxal phosphate)lysine (K226). (6S)-5,6,7,8-tetrahydrofolate is bound at residue E242.

It belongs to the SHMT family. In terms of assembly, homodimer. Pyridoxal 5'-phosphate is required as a cofactor.

Its subcellular location is the cytoplasm. The catalysed reaction is (6R)-5,10-methylene-5,6,7,8-tetrahydrofolate + glycine + H2O = (6S)-5,6,7,8-tetrahydrofolate + L-serine. The protein operates within one-carbon metabolism; tetrahydrofolate interconversion. Its pathway is amino-acid biosynthesis; glycine biosynthesis; glycine from L-serine: step 1/1. In terms of biological role, catalyzes the reversible interconversion of serine and glycine with tetrahydrofolate (THF) serving as the one-carbon carrier. This reaction serves as the major source of one-carbon groups required for the biosynthesis of purines, thymidylate, methionine, and other important biomolecules. Also exhibits THF-independent aldolase activity toward beta-hydroxyamino acids, producing glycine and aldehydes, via a retro-aldol mechanism. This Thermus thermophilus (strain ATCC BAA-163 / DSM 7039 / HB27) protein is Serine hydroxymethyltransferase.